Here is a 685-residue protein sequence, read N- to C-terminus: Mitotic interactor and substrate of PLK1 (685 aa).

Residue Ser-78 is modified to Phosphoserine; by CDK1. Disordered regions lie at residues 155-181 and 207-253; these read SGTV…STPL and NKEV…QGKG. Thr-172 is modified (phosphothreonine; by CDK1). Thr-179 is modified (phosphothreonine). Ser-214 carries the phosphoserine; by CDK1 modification. At Thr-219 the chain carries Phosphothreonine. Residue Ser-284 is modified to Phosphoserine; by CDK1. Thr-287 carries the post-translational modification Phosphothreonine; by CDK1. Residues 345–499 are disordered; that stretch reads GRPSLYVQRD…PWKLPRGSPQ (155 aa). Phosphoserine is present on Ser-348. The segment covering 355-371 has biased composition (basic and acidic residues); sequence MVQETQREEDHRREGLH. Position 377 is a phosphothreonine; by CDK1 (Thr-377). Ser-382 carries the phosphoserine modification. The segment covering 392 to 417 has biased composition (low complexity); sequence ALSSDSILSPDSILSPAPDARAADPA. 3 positions are modified to phosphoserine; by PLK1: Ser-394, Ser-395, and Ser-397. Ser-406 and Ser-436 each carry phosphoserine. Polar residues predominate over residues 454 to 469; it reads SGLSTVDTEAATSPKA. Ser-477 carries the phosphoserine; by PLK1 modification. Residues 478 to 488 show a composition bias toward polar residues; it reads ESSGKPMSTKQ. Phosphoserine occurs at positions 547 and 549. The stretch at 551–575 forms a coiled coil; the sequence is DLLERERESVLRREREVAEERRNAL. Disordered stretches follow at residues 575 to 607 and 629 to 651; these read LFPE…SYSV and PVDS…NPSD. Ser-581 bears the Phosphoserine; by PLK1 mark. A Phosphothreonine modification is found at Thr-583. Residues 589–607 show a composition bias toward polar residues; that stretch reads DQNSRSSSQASGITGSYSV. Ser-592 carries the post-translational modification Phosphoserine; by PLK1. The residue at position 681 (Ser-681) is a Phosphoserine.

It belongs to the MISP family. In terms of assembly, associates with F-actin. Interacts with DCTN1; this interaction regulates DCTN1 distribution at the cell cortex. Interacts with PTK2/FAK and MAPRE1. In terms of processing, phosphorylated by CDK1 and PLK1. CDK1 is the priming kinase for PLK1 phosphorylation. Phosphorylation by PLK1 is required for proper spindle orientation at metaphase.

It is found in the cell junction. The protein resides in the focal adhesion. Its subcellular location is the cytoplasm. It localises to the cytoskeleton. The protein localises to the cell cortex. Functionally, plays a role in mitotic spindle orientation and mitotic progression. Regulates the distribution of dynactin at the cell cortex in a PLK1-dependent manner, thus stabilizing cortical and astral microtubule attachments required for proper mitotic spindle positioning. May link microtubules to the actin cytospkeleton and focal adhesions. May be required for directed cell migration and centrosome orientation. May also be necessary for proper stacking of the Golgi apparatus. This Pongo abelii (Sumatran orangutan) protein is Mitotic interactor and substrate of PLK1.